The primary structure comprises 466 residues: Asparagine--tRNA ligase (466 aa).

The protein belongs to the class-II aminoacyl-tRNA synthetase family. Homodimer.

It is found in the cytoplasm. The enzyme catalyses tRNA(Asn) + L-asparagine + ATP = L-asparaginyl-tRNA(Asn) + AMP + diphosphate + H(+). The polypeptide is Asparagine--tRNA ligase (Wigglesworthia glossinidia brevipalpis).